A 177-amino-acid chain; its full sequence is UPF0114 protein HP_0189 (177 aa).

Helical transmembrane passes span 15–35 (WLLAPLCIAMSLVLVVLGYVF), 54–74 (LVLSALGLVDLLFMAGLVLMV), and 145–165 (PIFWQVVIHLVFVCSALLAAV).

This sequence belongs to the UPF0114 family.

The protein resides in the cell membrane. The protein is UPF0114 protein HP_0189 of Helicobacter pylori (strain ATCC 700392 / 26695) (Campylobacter pylori).